Reading from the N-terminus, the 294-residue chain is 4-hydroxy-tetrahydrodipicolinate synthase (294 aa).

Thr-44 is a pyruvate binding site. The Proton donor/acceptor role is filled by Tyr-132. Residue Lys-161 is the Schiff-base intermediate with substrate of the active site. Ile-206 contributes to the pyruvate binding site.

This sequence belongs to the DapA family. As to quaternary structure, homotetramer; dimer of dimers.

It localises to the cytoplasm. The enzyme catalyses L-aspartate 4-semialdehyde + pyruvate = (2S,4S)-4-hydroxy-2,3,4,5-tetrahydrodipicolinate + H2O + H(+). The protein operates within amino-acid biosynthesis; L-lysine biosynthesis via DAP pathway; (S)-tetrahydrodipicolinate from L-aspartate: step 3/4. In terms of biological role, catalyzes the condensation of (S)-aspartate-beta-semialdehyde [(S)-ASA] and pyruvate to 4-hydroxy-tetrahydrodipicolinate (HTPA). This chain is 4-hydroxy-tetrahydrodipicolinate synthase, found in Thermotoga petrophila (strain ATCC BAA-488 / DSM 13995 / JCM 10881 / RKU-1).